A 99-amino-acid chain; its full sequence is CTP synthase (99 aa).

Residues 1 to 99 enclose the Glutamine amidotransferase type-1 domain; sequence TMVTKLEKDS…FIKAIIENNK (99 aa). Arg28 is an L-glutamine binding site. Residues His73 and Glu75 contribute to the active site.

It belongs to the CTP synthase family. In terms of assembly, homotetramer.

It carries out the reaction UTP + L-glutamine + ATP + H2O = CTP + L-glutamate + ADP + phosphate + 2 H(+). It catalyses the reaction L-glutamine + H2O = L-glutamate + NH4(+). The catalysed reaction is UTP + NH4(+) + ATP = CTP + ADP + phosphate + 2 H(+). It functions in the pathway pyrimidine metabolism; CTP biosynthesis via de novo pathway; CTP from UDP: step 2/2. Allosterically activated by GTP, when glutamine is the substrate; GTP has no effect on the reaction when ammonia is the substrate. The allosteric effector GTP functions by stabilizing the protein conformation that binds the tetrahedral intermediate(s) formed during glutamine hydrolysis. Inhibited by the product CTP, via allosteric rather than competitive inhibition. Catalyzes the ATP-dependent amination of UTP to CTP with either L-glutamine or ammonia as the source of nitrogen. Regulates intracellular CTP levels through interactions with the four ribonucleotide triphosphates. The protein is CTP synthase of Mycoplasma capricolum subsp. capripneumoniae.